The primary structure comprises 192 residues: 7-methyl-GTP pyrophosphatase (192 aa).

The active-site Proton acceptor is D69.

It belongs to the Maf family. YceF subfamily. A divalent metal cation is required as a cofactor.

Its subcellular location is the cytoplasm. The catalysed reaction is N(7)-methyl-GTP + H2O = N(7)-methyl-GMP + diphosphate + H(+). Functionally, nucleoside triphosphate pyrophosphatase that hydrolyzes 7-methyl-GTP (m(7)GTP). May have a dual role in cell division arrest and in preventing the incorporation of modified nucleotides into cellular nucleic acids. The chain is 7-methyl-GTP pyrophosphatase (maf-2) from Pseudomonas putida (strain ATCC 47054 / DSM 6125 / CFBP 8728 / NCIMB 11950 / KT2440).